Reading from the N-terminus, the 205-residue chain is Small ribosomal subunit protein uS4 (205 aa).

The S4 RNA-binding domain maps to 110–172; that stretch reads RRLQTIIYRK…VGSPITKEKL (63 aa). The tract at residues 173–205 is disordered; the sequence is MAKPQPASAPKAAAAPKAAAAPAEAAAAPKKEE. Low complexity predominate over residues 174 to 205; the sequence is AKPQPASAPKAAAAPKAAAAPAEAAAAPKKEE.

This sequence belongs to the universal ribosomal protein uS4 family. As to quaternary structure, part of the 30S ribosomal subunit. Contacts protein S5. The interaction surface between S4 and S5 is involved in control of translational fidelity.

Functionally, one of the primary rRNA binding proteins, it binds directly to 16S rRNA where it nucleates assembly of the body of the 30S subunit. With S5 and S12 plays an important role in translational accuracy. This chain is Small ribosomal subunit protein uS4, found in Methanocella arvoryzae (strain DSM 22066 / NBRC 105507 / MRE50).